We begin with the raw amino-acid sequence, 375 residues long: uncharacterized protein (375 aa).

It belongs to the mimivirus L17x/L18x family.

This is an uncharacterized protein from Acanthamoeba polyphaga mimivirus (APMV).